Reading from the N-terminus, the 304-residue chain is Protease HtpX homolog (304 aa).

2 helical membrane-spanning segments follow: residues 14–34 (VFII…IGII) and 39–59 (YLNG…IMVM). Position 144 (H144) interacts with Zn(2+). E145 is a catalytic residue. H148 provides a ligand contact to Zn(2+). Transmembrane regions (helical) follow at residues 159–179 (IAIA…RLIF) and 202–222 (IIIY…ATAI). E231 is a Zn(2+) binding site. The tract at residues 275-304 (SSPLKSKKDKPGLFDSHPPISSRIERLENM) is disordered.

Belongs to the peptidase M48B family. Zn(2+) is required as a cofactor.

The protein localises to the cell membrane. This chain is Protease HtpX homolog, found in Listeria innocua serovar 6a (strain ATCC BAA-680 / CLIP 11262).